We begin with the raw amino-acid sequence, 398 residues long: Type III polyketide synthase pspB (398 aa).

Residues Lys47 and 47 to 54 (KLLQINRS) each bind CoA. Cys152 serves as the catalytic Nucleophile. 214 to 215 (SD) provides a ligand contact to substrate. Residues Leu267, Gly321, 321-324 (GGEA), and Ala324 contribute to the CoA site.

It belongs to the thiolase-like superfamily. Chalcone/stilbene synthases family. Homodimer.

The enzyme catalyses 11 malonyl-CoA + acetyl-CoA + S-adenosyl-L-methionine + 12 NADPH + 22 H(+) = soppiline B + S-adenosyl-L-homocysteine + 12 CO2 + 12 NADP(+) + 12 CoA + 8 H2O. Its pathway is secondary metabolite biosynthesis. Its function is as follows. Type III polyketide synthase; part of the gene cluster that mediates the biosynthesis of the alkylresorcinols called soppilines. The biosynthesis starts with the HR-PKS pspA-catalyzed carbon chain assembly through nine chain elongation cycles, using acetyl CoA and malonyl CoA as a starter and extender units, respectively, to produce the polyketide soppiline A. In the first round, the KR, DH, and CMeT domains work to produce 2-methyl-2-butenyl thioester. In rounds 2 to 5, the KR, DH, and ER domains fully catalyze the reduction of the elongated beta-ketothioester, resulting in the insertion of eight methylene units. The unusual Z,E,Z-triene motif is likely constructed during rounds 6 to 8. Typically, the DH domain introduces a double bond at an alpha,beta-position of an elongated polyketide chain, with the dehydration of a beta-hydroxy group. The last extension cycle would be carried out with L-oriented beta-ketoreduction by the KR domain to produce beta-hydroxy carboxylic acid soppiline A. The type III PKS pspB intercepts the elongated polyketide chain at round 8 from the HR-PKS pspA, followed by a tri-keto extension and decarboxylative aldol cyclization to produce 1,3,5-trisubstituted alkylresorcinol soppiline B. Subsequently, the cytochrome P450 monooxygenase pspC catalyzes three-step oxidations at the C-4 methyl group to carboxylic acid to yield soppiline C. This is Type III polyketide synthase pspB from Penicillium soppii.